We begin with the raw amino-acid sequence, 843 residues long: MATKKAGSRLETEIERCRSECQWERIPELVKQLSAKLIANDDMAELLLGESKLEQYLKEHPLRQGASPRGPKPQLTEVRKHLTAALDRGNLKSEFLQESNLIMAKLNYVEGDYKEALNIYARVGLDDLPLTAVPPYRLRVIAEAYATKGLCLEKLPISSSTSNLHVDREQDVITCYEKAGDIALLYLQEIERVILSNIQNRSPKPGPAPHDQELGFFLETGLQRAHVLYFKNGNLTRGVGRFRELLRAVETRTTQNLRMTIARQLAEILLRGMCEQSYWNPLEDPPCQSPLDDPLRKGANTKTYTLTRRARVYSGENIFCPQENTEEALLLLLISESMANRDAVLSRIPEHKSDRLISLQSASVVYDLLTIALGRRGQYEMLSECLERAMKFAFEEFHLWYQFALSLMAAGKSARAVKVLKECIRLKPDDATIPLLAAKLCMGSLHWLEEAEKFAKTVVDVGEKTSEFKAKGYLALGLTYSLQATDASLRGMQEVLQRKALLAFQRAHSLSPTDHQAAFYLALQLAISRQIPEALGYVRQALQLQGDDANSLHLLALLLSAQKHYHDALNIIDMALSEYPENFILLFSKVKLQSLCRGPDEALLTCKHMLQIWKSCYNLTNPSDSGRGSSLLDRTIADRRQLNTITLPDFSDPETGSVHATSVAASRVEQALSEVASSLQSSAPKQGPLHPWMTLAQIWLHAAEVYIGIGKPAEATACTQEAANLFPMSHNVLYMRGQIAELRGSMDEARRWYEEALAISPTHVKSMQRLALILHQLGRYSLAEKILRDAVQVNSTAHEVWNGLGEVLQAQGNDAAATECFLTALELEASSPAVPFTIIPRVL.

The TPR 1 repeat unit spans residues Gln97 to Thr131. Residues Ser160 and Ser202 each carry the phosphoserine modification. TPR repeat units lie at residues Glu219 to Arg252, Ser363 to Glu396, Phe397 to Asp430, Thr479 to Asp514, Gln516 to Asp548, and Ala549 to Asn582. Phosphoserine is present on residues Ser625, Ser629, Ser630, Ser673, Ser677, Ser678, and Ser681. TPR repeat units follow at residues Ala696 to Ser729, His730 to His763, Lys765 to Ala797, and His798 to Ser831.

In terms of assembly, component of a phosphatidylinositol 4-kinase (PI4K) complex, composed of PI4KA, EFR3 (EFR3A or EFR3B), TTC7 (TTC7A or TTC7B) and HYCC (HYCC1 or HYCC2). Interacts with PI4KA, interaction is direct. Interacts with EFR3 (EFR3A or EFR3B), interaction is direct. Interacts with HYCC (HYCC1 or HYCC2), interaction is direct. Association with the PI4K complex is strongly reduced by TMEM150A.

The protein resides in the cytoplasm. The protein localises to the cytosol. It localises to the cell membrane. In terms of biological role, component of a complex required to localize phosphatidylinositol 4-kinase (PI4K) to the plasma membrane. The complex acts as a regulator of phosphatidylinositol 4-phosphate (PtdIns(4)P) synthesis. In the complex, plays a central role in bridging PI4KA to EFR3B and HYCC1, via direct interactions. The chain is Tetratricopeptide repeat protein 7B (TTC7B) from Homo sapiens (Human).